Reading from the N-terminus, the 151-residue chain is Small ribosomal subunit protein uS15 (151 aa).

This sequence belongs to the universal ribosomal protein uS15 family.

This chain is Small ribosomal subunit protein uS15 (RpS13), found in Plutella xylostella (Diamondback moth).